Here is a 580-residue protein sequence, read N- to C-terminus: Cytochrome P450 monooxygenase helB1 (580 aa).

A disordered region spans residues 1–32 (MRTYAIRPVSNRLPGPIEPKKHRRDRDNSTTG). Residue Asn-28 is glycosylated (N-linked (GlcNAc...) asparagine). A helical membrane pass occupies residues 61-81 (FLNTISVLQVLAAIFIGALTY). Residue Cys-497 participates in heme binding.

The protein belongs to the cytochrome P450 family. It depends on heme as a cofactor.

The protein localises to the membrane. The protein operates within mycotoxin biosynthesis. In terms of biological role, cytochrome P450 monooxygenase; part of the gene cluster that mediates the biosynthesis of helvolic acid, an antibacterial nortriterpenoid. Protostadienol synthase helA cyclizes (3S)-oxidosqualene to (17Z)-protosta-17(20),24-dien-3-beta-ol (protostadienol). The synthesis of protostadienol is followed by several steps of monooxygenation, dehydrogenation, and acyl transfer to yield the final helvolic acid. Following the cyclization to the tetracyclic protostadienol by helA, cytochrome P450 monooxygenases helB1-mediated and helB2-mediated oxidation at C-4 and C-16, acyltransferase helD2-dependent acetylation of 16-OH, oxidation of C-21 by cytochrome P450 monooxygenase helB4, and short chain dehydrogenase helC-dependent oxidative decarboxylation yield the fusidane skeleton. This intermediate is further modified in three additional steps mediated by the cytochrome P450 monooxygenase helB3, the acyltransferase helD1, and the 3-ketosteroid 1-dehydrogenase helE to give helvolic acid. Compared with the late stages in the biosynthesis of helvolic acid, enzymes involved in the early stage modifications act in a relatively strict order. The hydroxylation of C-16 by helB1 and subsequent acetylation by helD2 should occur before the helB3-mediated oxidation of C-21. C-4 demethylation in fusidane-type antibiotics proceeds in an unusual manner though it is also achieved by oxidative decarboxylation. The methyl group at C-4 beta position is oxidized by helB1 and subsequently removed by the short chain dehydrogenase helC. This chain is Cytochrome P450 monooxygenase helB1, found in Aspergillus fumigatus (strain ATCC MYA-4609 / CBS 101355 / FGSC A1100 / Af293) (Neosartorya fumigata).